The sequence spans 121 residues: Apoptin (121 aa).

Disordered regions lie at residues 1–28 (MNAH…LETP) and 57–95 (LRSA…PSEY). Residues 58 to 70 (RSATADNSENTGF) show a composition bias toward polar residues.

It belongs to the gyrovirus apoptin family.

Its subcellular location is the host nucleus. Functionally, may act as transcriptional regulator. Induces apoptosis in infected cells. Element of infectious replication cycle. The chain is Apoptin (VP3) from Gallus gallus (Chicken).